Here is a 221-residue protein sequence, read N- to C-terminus: Putative NAD(P)H nitroreductase YfkO (221 aa).

Residues 15-17 (RHA) and 73-75 (QKQ) each bind FMN. 157–162 (AAAQIG) lines the NAD(+) pocket. Residues 169 to 170 (EG) and R211 contribute to the FMN site.

It belongs to the nitroreductase family. Monomer. FMN serves as cofactor.

This chain is Putative NAD(P)H nitroreductase YfkO (yfkO), found in Bacillus subtilis (strain 168).